We begin with the raw amino-acid sequence, 610 residues long: Glutamine--fructose-6-phosphate aminotransferase [isomerizing] (610 aa).

C2 functions as the Nucleophile; for GATase activity in the catalytic mechanism. The 217-residue stretch at 2–218 folds into the Glutamine amidotransferase type-2 domain; that stretch reads CGIVGAVAQR…EGDVAEITRH (217 aa). 2 SIS domains span residues 286 to 426 and 459 to 600; these read AADI…LKGR and LSED…VDQP. K605 serves as the catalytic For Fru-6P isomerization activity.

As to quaternary structure, homodimer.

Its subcellular location is the cytoplasm. The enzyme catalyses D-fructose 6-phosphate + L-glutamine = D-glucosamine 6-phosphate + L-glutamate. Catalyzes the first step in hexosamine metabolism, converting fructose-6P into glucosamine-6P using glutamine as a nitrogen source. The chain is Glutamine--fructose-6-phosphate aminotransferase [isomerizing] from Haemophilus ducreyi (strain 35000HP / ATCC 700724).